The sequence spans 89 residues: Small ribosomal subunit protein uS15 (89 aa).

It belongs to the universal ribosomal protein uS15 family. As to quaternary structure, part of the 30S ribosomal subunit. Forms a bridge to the 50S subunit in the 70S ribosome, contacting the 23S rRNA.

Its function is as follows. One of the primary rRNA binding proteins, it binds directly to 16S rRNA where it helps nucleate assembly of the platform of the 30S subunit by binding and bridging several RNA helices of the 16S rRNA. Forms an intersubunit bridge (bridge B4) with the 23S rRNA of the 50S subunit in the ribosome. The sequence is that of Small ribosomal subunit protein uS15 from Oenococcus oeni (strain ATCC BAA-331 / PSU-1).